Consider the following 300-residue polypeptide: Pantoate kinase (300 aa).

It belongs to the GHMP kinase family. PoK subfamily. Homodimer.

It carries out the reaction (R)-pantoate + ATP = (R)-4-phosphopantoate + ADP + H(+). It functions in the pathway cofactor biosynthesis; coenzyme A biosynthesis. Moderately stimulated in the presence of potassium cations. Inhibited by increasing concentrations of pantoate. Activity is not affected by CoA/acetyl-CoA. In terms of biological role, phosphorylates (R)-pantoate to form (R)-4-phosphopantoate in the CoA biosynthesis pathway. Displays broad nucleotide specificity and utilizes ATP, GTP, UTP, and CTP with comparable catalytic efficiencies. This chain is Pantoate kinase, found in Thermococcus kodakarensis (strain ATCC BAA-918 / JCM 12380 / KOD1) (Pyrococcus kodakaraensis (strain KOD1)).